A 907-amino-acid chain; its full sequence is MWNVSKSSNNLGAYKLPLEAQTPPEKISPFDAMSAAQPEGKAPHDQLQNDQYPIQQAEDRGRHLVEQAEIQAHVQHCHSKAPEIGDATKTQSVSEKLGTAKNSSCDASQILIGSKNDDFHKNKAGSNGDINKSSDPSALRCSLSPAPRRVPKSKKSYGAATIGGKVYHPHEKTDSTIADFLSRSLSNNAYRSERHLRKRALAYLNHISAEKEITSNACFAMKDVNSFAHKQSEWLCHLERSLWRDEPALQFHDRQQLGNEVLGLKKPDDQSPYFKPRAWKISDEAASAFAMMLKGESGPFTQDQVKVGFEICQEGELLAGRLKIQPRMAFRLKNRHDANRSGTHSVKSLSGLDLSADVGTDIREFFQVPVMSGTSGTSSDVVIAARYAAMHAGLKWSAPELTIDQAKHALIDLSMDFFRRNGPAVVMALRMNSLRKNQGLPYKEVDRCEVFTHSYAEIHGAISLTIDGVDPADKVEVKNRLYGYTLDAKATLMKIADRSIRRGVRSKVDIRSTSTSLQTPQLRRVLEKKKIVQKVAELYSEMGKAGNSATLKEAITKSSVKELLVNDKPVVSRDYALGEPLMVRSLRFSHDHEATSSFGSAGKTPAKREVDTLCDNSTAFDIVMTPFSVINAKAKGDTISEMKVPHRPKWKGLPSVLYKVTASVDLPEYAVARPGFGDIHSFNSNKAFSSEFSSVRNSLSHAEKMGFIENSLKPYIKHDPDRESFDFKHSIDELADAQCMLQSRKPNSTLRHNEYCAKLELWDAKAIEVGMSRPVAVATLIEFNLEMLSAARYIEDEGYDGKLITNFLERQLSWFGQNAALNKEVTLKKLWGLPFDERKAVAEKVCEALRQGVSLCVYEKNVEGSRIRELSLLNFNAYDIMRGIELFLSSKLLQPPTGAGPTVKSRL.

Polar residues-rich tracts occupy residues 1–11 (MWNVSKSSNNL) and 124–136 (AGSNGDINKSSDP). Disordered stretches follow at residues 1-47 (MWNV…HDQL) and 116-157 (NDDF…KKSY).

This chain is Avirulence protein A (avrA), found in Pseudomonas savastanoi pv. glycinea (Pseudomonas syringae pv. glycinea).